The following is a 459-amino-acid chain: Smoothelin-like protein 1 (459 aa).

The span at 1–27 shows a compositional bias: polar residues; sequence MEQTEGNSSEDGTTVSPTAGNLETPGS. The tract at residues 1–314 is disordered; the sequence is MEQTEGNSSE…RPRGPRAQNR (314 aa). Composition is skewed to basic and acidic residues over residues 42-55, 75-105, 112-168, 185-211, and 221-232; these read SDKE…EHLC, DELK…KEDT, DTGK…KEDA, ADVK…KELV, and EQGKENESEERA. A coiled-coil region spans residues 124–154; it reads NEVREKEEAMLASEKQKVDEKETNLESKEKS. Over residues 260-283 the composition is skewed to low complexity; sequence PESTGETSPSASESSPSEVPGSPT. The segment covering 287 to 300 has biased composition (basic and acidic residues); sequence PSEKKKDRAPERRV. Ser301 is modified (phosphoserine; by PKA and PKG). In terms of domain architecture, Calponin-homology (CH) spans 343-449; that stretch reads GGVKNMLLEW…YIQELYRSLV (107 aa). The segment at 441–459 is calmodulin-binding; the sequence is IQELYRSLVQKGLVKTKKK.

This sequence belongs to the smoothelin family. As to quaternary structure, interacts with PPP1R12A. In terms of processing, maximal phosphorylation of Ser-301 correlates with maximal relaxation of aorta in response to acetylcholine. In terms of tissue distribution, widely expressed, with highest expression in skeletal muscles (at protein level). Within striated muscles, significantly more expressed in soleus muscle compared with plantaris muscle or white vastus (at protein level). 30-40% lower expression in females than in males (at protein level). Expressed in type 2a fibers, but not detected in fast twitch type 2b muscle white vastus nor in oxidative type I/b heart muscle (at protein level). Expressed within myometrial cells of the uterus, as well as in the endometrial layer. In the aorta, confined to smooth muscle cells. Not detected in endothelial cells.

The protein resides in the cytoplasm. Its subcellular location is the myofibril. The protein localises to the sarcomere. It localises to the i band. It is found in the m line. The protein resides in the nucleus. Its function is as follows. Plays a role in the regulation of contractile properties of both striated and smooth muscles. When unphosphorylated, may inhibit myosin dephosphorylation. Phosphorylation at Ser-301 reduces this inhibitory activity. The sequence is that of Smoothelin-like protein 1 (Smtnl1) from Mus musculus (Mouse).